Consider the following 232-residue polypeptide: RNA chaperone ProQ (232 aa).

The disordered stretch occupies residues 105–182; it reads EAKARVQAQR…REEQHTPVSD (78 aa). Over residues 117-136 the composition is skewed to basic and acidic residues; it reads QQAKKREAAAAAGEKEDAPR. Basic residues predominate over residues 137–146; the sequence is RERKPRPTTP. Over residues 147 to 177 the composition is skewed to basic and acidic residues; the sequence is RRKEGAERKPRAQKPVEKAPKTAKAPREEQH.

It belongs to the ProQ family.

Its subcellular location is the cytoplasm. Functionally, RNA chaperone with significant RNA binding, RNA strand exchange and RNA duplexing activities. May regulate ProP activity through an RNA-based, post-transcriptional mechanism. The protein is RNA chaperone ProQ of Shigella dysenteriae serotype 1 (strain Sd197).